Consider the following 264-residue polypeptide: Glutamate racemase (264 aa).

Substrate-binding positions include 10–11 (DS) and 42–43 (YG). Residue C73 is the Proton donor/acceptor of the active site. 74-75 (NT) provides a ligand contact to substrate. Catalysis depends on C183, which acts as the Proton donor/acceptor. Substrate is bound at residue 184 to 185 (TH).

This sequence belongs to the aspartate/glutamate racemases family.

The catalysed reaction is L-glutamate = D-glutamate. The protein operates within cell wall biogenesis; peptidoglycan biosynthesis. Functionally, provides the (R)-glutamate required for cell wall biosynthesis. The chain is Glutamate racemase from Streptococcus pneumoniae (strain ATCC BAA-255 / R6).